The primary structure comprises 68 residues: uncharacterized protein (68 aa).

The region spanning 2-67 (KTITLNIKGI…VIEDAGFDAT (66 aa)) is the HMA domain. Residues cysteine 13 and cysteine 16 each contribute to the a metal cation site.

This is an uncharacterized protein from Haemophilus influenzae (strain ATCC 51907 / DSM 11121 / KW20 / Rd).